A 151-amino-acid polypeptide reads, in one-letter code: Caveolin-3 (151 aa).

The Cytoplasmic segment spans residues 1–83 (MMTEEHTDLE…RLLSTLLGVP (83 aa)). A Glycyl lysine isopeptide (Lys-Gly) (interchain with G-Cter in SUMO3) cross-link involves residue Lys-38. The required for interaction with DAG1 stretch occupies residues 64–114 (TFTVSKYWCYRLLSTLLGVPLALLWGFLFACISFCHIWAVVPCIKSYLIEI). Residues 84 to 104 (LALLWGFLFACISFCHIWAVV) constitute an intramembrane region (helical). Topologically, residues 105-151 (PCIKSYLIEIQCISHIYSLCIRTFCNPLFAALGQVCSNIKVVLRREG) are cytoplasmic.

The protein belongs to the caveolin family. Homooligomer. Interacts with DYSF. Interacts with DLG1 and KCNA5; forms a ternary complex. Interacts with DAG1 (via its C-terminal); the interaction prevents binding of DAG1 with DMD. Interacts with TRIM72. Interacts with MUSK; may regulate MUSK signaling. Interacts with POPDC1. Interacts with CAVIN1, CAVIN2 and CAVIN4. Sumoylation with SUMO3 by PIAS4 may reduce agonist-induced internalization and desensitization of adrenergic receptor ABRD2. Expressed predominantly in muscle.

It is found in the golgi apparatus membrane. The protein resides in the cell membrane. The protein localises to the membrane. It localises to the caveola. Its subcellular location is the sarcolemma. Functionally, may act as a scaffolding protein within caveolar membranes. Interacts directly with G-protein alpha subunits and can functionally regulate their activity. May also regulate voltage-gated potassium channels. Plays a role in the sarcolemma repair mechanism of both skeletal muscle and cardiomyocytes that permits rapid resealing of membranes disrupted by mechanical stress. Mediates the recruitment of CAVIN2 and CAVIN3 proteins to the caveolae. In Mus musculus (Mouse), this protein is Caveolin-3.